Consider the following 147-residue polypeptide: Hemoglobin subunit epsilon-2 (147 aa).

One can recognise a Globin domain in the interval 3 to 147 (HFTTEENVAV…VANALTHKYH (145 aa)). Residues Tyr-64 and His-93 each contribute to the heme b site.

Belongs to the globin family. Red blood cells.

Functionally, hemoglobin epsilon chain is a beta-type chain found in early embryos. In Bos taurus (Bovine), this protein is Hemoglobin subunit epsilon-2 (HBE2).